A 474-amino-acid polypeptide reads, in one-letter code: Glycogen synthase (474 aa).

An ADP-alpha-D-glucose-binding site is contributed by Lys-15.

It belongs to the glycosyltransferase 1 family. Bacterial/plant glycogen synthase subfamily.

It carries out the reaction [(1-&gt;4)-alpha-D-glucosyl](n) + ADP-alpha-D-glucose = [(1-&gt;4)-alpha-D-glucosyl](n+1) + ADP + H(+). It participates in glycan biosynthesis; glycogen biosynthesis. Functionally, synthesizes alpha-1,4-glucan chains using ADP-glucose. In Chlamydia muridarum (strain MoPn / Nigg), this protein is Glycogen synthase.